Consider the following 287-residue polypeptide: Syntaxin-11 (287 aa).

Positions 41 to 71 (LESLYRVIQDIQDENQLLLIDVRRLGRQNVR) form a coiled coil. Positions 204-266 (LNEIESRHRE…GEAKAQVRKA (63 aa)) constitute a t-SNARE coiled-coil homology domain.

It belongs to the syntaxin family. Interacts with the SNARE proteins SNAP-23 and VAMP.

It is found in the membrane. The protein localises to the golgi apparatus. It localises to the trans-Golgi network membrane. SNARE that acts to regulate protein transport between late endosomes and the trans-Golgi network. This chain is Syntaxin-11 (Stx11), found in Mus musculus (Mouse).